Reading from the N-terminus, the 104-residue chain is uncharacterized protein (104 aa).

This is an uncharacterized protein from Escherichia coli (Bacteriophage T4).